Reading from the N-terminus, the 250-residue chain is Maleate isomerase (250 aa).

Substrate-binding positions include Asn15, 80-82 (CLV), Tyr137, and Asn167. The active-site Nucleophile is Cys80. Cys80 carries the post-translational modification S-(2-succinyl)cysteine. Residue Cys198 is the Proton donor of the active site. 199–200 (VQ) serves as a coordination point for substrate.

The protein belongs to the maleate isomerase family. As to quaternary structure, homodimer.

It catalyses the reaction maleate = fumarate. Its pathway is cofactor degradation; nicotinate degradation. Catalyzes cis-trans isomerization of the C2-C3 double bond in maleate to yield fumarate in the aerobic nicotinate degradation pathway. The sequence is that of Maleate isomerase from Pseudomonas putida (strain ATCC 47054 / DSM 6125 / CFBP 8728 / NCIMB 11950 / KT2440).